The primary structure comprises 355 residues: NADH-quinone oxidoreductase subunit H (355 aa).

8 helical membrane-spanning segments follow: residues V25–W45, W91–I111, L126–A146, M170–V190, F205–I225, M253–A273, F290–W310, and V330–L350.

The protein belongs to the complex I subunit 1 family. In terms of assembly, NDH-1 is composed of 14 different subunits. Subunits NuoA, H, J, K, L, M, N constitute the membrane sector of the complex.

It localises to the cell inner membrane. The enzyme catalyses a quinone + NADH + 5 H(+)(in) = a quinol + NAD(+) + 4 H(+)(out). In terms of biological role, NDH-1 shuttles electrons from NADH, via FMN and iron-sulfur (Fe-S) centers, to quinones in the respiratory chain. The immediate electron acceptor for the enzyme in this species is believed to be ubiquinone. Couples the redox reaction to proton translocation (for every two electrons transferred, four hydrogen ions are translocated across the cytoplasmic membrane), and thus conserves the redox energy in a proton gradient. This subunit may bind ubiquinone. The sequence is that of NADH-quinone oxidoreductase subunit H from Burkholderia cenocepacia (strain HI2424).